Consider the following 739-residue polypeptide: DNA ligase (739 aa).

Residues 34-38 (DADYD), 83-84 (SL), and Glu-117 each bind NAD(+). Lys-119 functions as the N6-AMP-lysine intermediate in the catalytic mechanism. Arg-140, Glu-175, Lys-291, and Lys-315 together coordinate NAD(+). Zn(2+) contacts are provided by Cys-420, Cys-423, Cys-438, and Cys-444. Residues 660-739 (ADDSPVAGKT…DGWLDLIGQA (80 aa)) form the BRCT domain.

It belongs to the NAD-dependent DNA ligase family. LigA subfamily. Mg(2+) serves as cofactor. It depends on Mn(2+) as a cofactor.

It carries out the reaction NAD(+) + (deoxyribonucleotide)n-3'-hydroxyl + 5'-phospho-(deoxyribonucleotide)m = (deoxyribonucleotide)n+m + AMP + beta-nicotinamide D-nucleotide.. Functionally, DNA ligase that catalyzes the formation of phosphodiester linkages between 5'-phosphoryl and 3'-hydroxyl groups in double-stranded DNA using NAD as a coenzyme and as the energy source for the reaction. It is essential for DNA replication and repair of damaged DNA. This is DNA ligase from Ruegeria sp. (strain TM1040) (Silicibacter sp.).